The primary structure comprises 415 residues: Succinate--CoA ligase [GDP-forming] subunit beta, mitochondrial (415 aa).

Residues 1-19 constitute a mitochondrion transit peptide; that stretch reads MLRAAGNLSKSMMKSQRRF. Residues 28–258 enclose the ATP-grasp domain; the sequence is KEILEKHGCS…SAAYRQKEIF (231 aa). GTP contacts are provided by residues Gln-39, 72–74, and Val-130; that span reads GRG. 2 residues coordinate Mg(2+): Asn-227 and Asp-241. Residues Asn-292 and 349–351 contribute to the substrate site; that span reads GIV.

Belongs to the succinate/malate CoA ligase beta subunit family. GTP-specific subunit beta subfamily. In terms of assembly, heterodimer of an alpha and a beta subunit. The beta subunit determines specificity for GTP. Requires Mg(2+) as cofactor.

The protein localises to the mitochondrion. The catalysed reaction is GTP + succinate + CoA = succinyl-CoA + GDP + phosphate. It functions in the pathway carbohydrate metabolism; tricarboxylic acid cycle; succinate from succinyl-CoA (ligase route): step 1/1. Its function is as follows. GTP-specific succinyl-CoA synthetase functions in the citric acid cycle (TCA), coupling the hydrolysis of succinyl-CoA to the synthesis of GTP and thus represents the only step of substrate-level phosphorylation in the TCA. The beta subunit provides nucleotide specificity of the enzyme and binds the substrate succinate, while the binding sites for coenzyme A and phosphate are found in the alpha subunit. This chain is Succinate--CoA ligase [GDP-forming] subunit beta, mitochondrial, found in Caenorhabditis elegans.